A 302-amino-acid chain; its full sequence is Nucleotide-binding protein SE_0548 (302 aa).

Residue 18-25 (GMSGAGKS) coordinates ATP. Position 69 to 72 (69 to 72 (DLRG)) interacts with GTP.

It belongs to the RapZ-like family.

Displays ATPase and GTPase activities. The sequence is that of Nucleotide-binding protein SE_0548 from Staphylococcus epidermidis (strain ATCC 12228 / FDA PCI 1200).